A 239-amino-acid chain; its full sequence is Increased recombination centers protein 22-1 (239 aa).

An N-terminal signal peptide occupies residues 1–19; sequence MKLSTIFTAFAATIATVAG. Residues 20 to 161 lie on the Lumenal side of the membrane; that stretch reads YETTGSKQTV…AAVSFFDPRL (142 aa). The helical transmembrane segment at 162–182 threads the bilayer; it reads IFLELVLLITFAGLIYVGYEI. Residues 183-239 are Cytoplasmic-facing; that stretch reads WGKQYFKGVAPVKAKKVSAAKASSPVASGPSTTSATGYDTNWIPESHLKQKKTKKVN. Low complexity predominate over residues 201-213; that stretch reads AAKASSPVASGPS. Residues 201–222 are disordered; the sequence is AAKASSPVASGPSTTSATGYDT.

Belongs to the IRC22 family.

It is found in the endoplasmic reticulum membrane. In terms of biological role, is probably involved in a pathway contributing to genomic integrity. The chain is Increased recombination centers protein 22-1 (IRC22-1) from Candida albicans (strain SC5314 / ATCC MYA-2876) (Yeast).